The primary structure comprises 503 residues: Probable cytosol aminopeptidase (503 aa).

Mn(2+) is bound by residues Lys-274 and Asp-279. Residue Lys-286 is part of the active site. Mn(2+) is bound by residues Asp-297, Asp-356, and Glu-358. Arg-360 is an active-site residue.

The protein belongs to the peptidase M17 family. Mn(2+) serves as cofactor.

The protein localises to the cytoplasm. The enzyme catalyses Release of an N-terminal amino acid, Xaa-|-Yaa-, in which Xaa is preferably Leu, but may be other amino acids including Pro although not Arg or Lys, and Yaa may be Pro. Amino acid amides and methyl esters are also readily hydrolyzed, but rates on arylamides are exceedingly low.. It carries out the reaction Release of an N-terminal amino acid, preferentially leucine, but not glutamic or aspartic acids.. In terms of biological role, presumably involved in the processing and regular turnover of intracellular proteins. Catalyzes the removal of unsubstituted N-terminal amino acids from various peptides. The chain is Probable cytosol aminopeptidase from Burkholderia orbicola (strain AU 1054).